The sequence spans 478 residues: ATP-dependent DNA helicase RecQ (478 aa).

The 175-residue stretch at 28–202 (IDCLLARRDC…VEGLNLRSPE (175 aa)) folds into the Helicase ATP-binding domain. 41-48 (LPTGGGKS) contacts ATP. The DEAH box signature appears at 142–145 (DEAH). One can recognise a Helicase C-terminal domain in the interval 229-380 (QLRRFLLKHL…RAEVLSQQIP (152 aa)). Residues Cys447, Cys467, Cys470, and Cys473 each coordinate Zn(2+).

The protein belongs to the helicase family. RecQ subfamily. It depends on Mg(2+) as a cofactor. Requires Zn(2+) as cofactor.

It catalyses the reaction Couples ATP hydrolysis with the unwinding of duplex DNA by translocating in the 3'-5' direction.. The enzyme catalyses ATP + H2O = ADP + phosphate + H(+). Functionally, an ATP-dependent DNA helicase which unwinds DNA in a 3'-5' direction. This Synechocystis sp. (strain ATCC 27184 / PCC 6803 / Kazusa) protein is ATP-dependent DNA helicase RecQ.